Consider the following 233-residue polypeptide: LexA repressor (233 aa).

The segment at residues 26-46 (FDEMKDALDLRSKSGIHRLIT) is a DNA-binding region (H-T-H motif). Catalysis depends on for autocatalytic cleavage activity residues serine 154 and lysine 192.

Belongs to the peptidase S24 family. Homodimer.

The catalysed reaction is Hydrolysis of Ala-|-Gly bond in repressor LexA.. Represses a number of genes involved in the response to DNA damage (SOS response), including recA and lexA. In the presence of single-stranded DNA, RecA interacts with LexA causing an autocatalytic cleavage which disrupts the DNA-binding part of LexA, leading to derepression of the SOS regulon and eventually DNA repair. In Nitrobacter winogradskyi (strain ATCC 25391 / DSM 10237 / CIP 104748 / NCIMB 11846 / Nb-255), this protein is LexA repressor.